We begin with the raw amino-acid sequence, 255 residues long: Large ribosomal subunit protein uL4 (255 aa).

It belongs to the universal ribosomal protein uL4 family. Part of the 50S ribosomal subunit.

Functionally, one of the primary rRNA binding proteins, this protein initially binds near the 5'-end of the 23S rRNA. It is important during the early stages of 50S assembly. It makes multiple contacts with different domains of the 23S rRNA in the assembled 50S subunit and ribosome. Forms part of the polypeptide exit tunnel. The sequence is that of Large ribosomal subunit protein uL4 from Thermoplasma volcanium (strain ATCC 51530 / DSM 4299 / JCM 9571 / NBRC 15438 / GSS1).